Here is a 299-residue protein sequence, read N- to C-terminus: Protease HtpX homolog (299 aa).

Transmembrane regions (helical) follow at residues 14–34 and 39–59; these read WLLL…VGYL and GFGG…TMIF. Histidine 143 is a binding site for Zn(2+). Glutamate 144 is an active-site residue. Residue histidine 147 participates in Zn(2+) binding. A run of 2 helical transmembrane segments spans residues 153-173 and 198-218; these read IRIS…AVMA and IILL…ATLV. A Zn(2+)-binding site is contributed by glutamate 227.

This sequence belongs to the peptidase M48B family. Zn(2+) serves as cofactor.

The protein localises to the cell membrane. This Streptococcus thermophilus (strain ATCC BAA-491 / LMD-9) protein is Protease HtpX homolog.